The following is a 662-amino-acid chain: DNA ligase (662 aa).

Residues 32–36 (DAEYD), 75–76 (SL), and Glu106 each bind NAD(+). Lys108 (N6-AMP-lysine intermediate) is an active-site residue. NAD(+) is bound by residues Arg129, Glu164, Lys271, and Lys295. Zn(2+)-binding residues include Cys389, Cys392, Cys407, and Cys413. The region spanning 580–662 (SSNSVLNNKI…HKVISLGVFK (83 aa)) is the BRCT domain.

It belongs to the NAD-dependent DNA ligase family. LigA subfamily. The cofactor is Mg(2+). It depends on Mn(2+) as a cofactor.

The enzyme catalyses NAD(+) + (deoxyribonucleotide)n-3'-hydroxyl + 5'-phospho-(deoxyribonucleotide)m = (deoxyribonucleotide)n+m + AMP + beta-nicotinamide D-nucleotide.. DNA ligase that catalyzes the formation of phosphodiester linkages between 5'-phosphoryl and 3'-hydroxyl groups in double-stranded DNA using NAD as a coenzyme and as the energy source for the reaction. It is essential for DNA replication and repair of damaged DNA. The chain is DNA ligase from Wolbachia pipientis wMel.